A 368-amino-acid chain; its full sequence is Protein mab-21-like (368 aa).

This sequence belongs to the mab-21 family.

The protein is Protein mab-21-like of Drosophila pseudoobscura pseudoobscura (Fruit fly).